The chain runs to 151 residues: Arginine repressor (151 aa).

It belongs to the ArgR family.

The protein localises to the cytoplasm. Its pathway is amino-acid biosynthesis; L-arginine biosynthesis [regulation]. Regulates arginine biosynthesis genes. This chain is Arginine repressor, found in Heliobacterium modesticaldum (strain ATCC 51547 / Ice1).